Consider the following 609-residue polypeptide: Transcription factor ntnD (609 aa).

The segment at residues 1–7 is a DNA-binding region (zn(2)-C6 fungal-type); the sequence is MCVGIEC. A disordered region spans residues 46 to 104; that stretch reads FRDQNESSLNRIHNRRTSNSQPSTRSINNTTTIPASNNEPLALSQPPSASSQNQVEKDQ. Polar residues predominate over residues 51-84; sequence ESSLNRIHNRRTSNSQPSTRSINNTTTIPASNNE. The segment covering 85 to 97 has biased composition (low complexity); it reads PLALSQPPSASSQ.

The protein belongs to the TRI10 transcription regulator family.

Its subcellular location is the nucleus. Functionally, transcription factor; part of the gene cluster that mediates the biosynthesis of meroterpenoids. The sequence is that of Transcription factor ntnD from Nectria sp.